We begin with the raw amino-acid sequence, 140 residues long: Con-Ins Im2 (140 aa).

A signal peptide spans 1-29; the sequence is MALTWPSSPPVLLTLLLSLLALQLCAVYG. Cystine bridges form between Cys35–Cys123, Cys50–Cys126, Cys62–Cys139, and Cys125–Cys130. The propeptide at 64-110 is c peptide; it reads PRGYVSNWFTKRSAPNKPAETFVDQNLRGVLLNKREALSYLRPREPR. Glu134 carries the 4-carboxyglutamate; partial modification.

The protein belongs to the insulin family. In terms of assembly, heterodimer of A and B chains; disulfide-linked. In terms of tissue distribution, expressed by the venom gland.

It is found in the secreted. Its function is as follows. This venom insulin facilitates prey capture by rapidly inducing hypoglycemic shock. Intraperitoneal injection of this peptide into zebrafish lowers blood glucose with the same potency than human insulin. In vivo, when applied to water, this peptide reduces overall locomotor activity of zebrafish larvae, observed as a significant decrease in the percentage of time spent swimming and movement frequency. This is Con-Ins Im2 from Conus imperialis (Imperial cone).